Reading from the N-terminus, the 669-residue chain is Probable L-type lectin-domain containing receptor kinase I.2 (669 aa).

An N-terminal signal peptide occupies residues 1–24 (MAQRFYLLLLLLIFLVNLICFSSQ). Over 25 to 295 (QDLSFVFNGF…FTEQKRKRSP (271 aa)) the chain is Extracellular. Residues 26–266 (DLSFVFNGFN…NQYILGWSFS (241 aa)) form a legume-lectin like region. N-linked (GlcNAc...) asparagine glycans are attached at residues Asn-132, Asn-189, Asn-212, and Asn-233. Residues 296–316 (LLIVLLVILTLVVIGGLGGYY) traverse the membrane as a helical segment. The Cytoplasmic segment spans residues 317–669 (LYRRKKYAEV…SHTILNGDGR (353 aa)). The 259-residue stretch at 351 to 609 (FNKDGRLGKG…MQYINRDQAL (259 aa)) folds into the Protein kinase domain. ATP-binding positions include 357 to 365 (LGKGGFGEV) and Lys-379. Asp-475 acts as the Proton acceptor in catalysis.

In the C-terminal section; belongs to the protein kinase superfamily. Ser/Thr protein kinase family. The protein in the N-terminal section; belongs to the leguminous lectin family.

It localises to the cell membrane. It carries out the reaction L-seryl-[protein] + ATP = O-phospho-L-seryl-[protein] + ADP + H(+). The catalysed reaction is L-threonyl-[protein] + ATP = O-phospho-L-threonyl-[protein] + ADP + H(+). In terms of biological role, involved in resistance response to the pathogenic fungus Alternaria brassicicola. This chain is Probable L-type lectin-domain containing receptor kinase I.2, found in Arabidopsis thaliana (Mouse-ear cress).